The chain runs to 638 residues: DNA mismatch repair protein MutL (638 aa).

The disordered stretch occupies residues 404–433 (FGTQTNAFGSMATPRDNSRGNYSAGESRQR).

It belongs to the DNA mismatch repair MutL/HexB family.

Its function is as follows. This protein is involved in the repair of mismatches in DNA. It is required for dam-dependent methyl-directed DNA mismatch repair. May act as a 'molecular matchmaker', a protein that promotes the formation of a stable complex between two or more DNA-binding proteins in an ATP-dependent manner without itself being part of a final effector complex. The polypeptide is DNA mismatch repair protein MutL (Shewanella baltica (strain OS195)).